Here is a 373-residue protein sequence, read N- to C-terminus: MTDADFAEQLKDLDTTLRNIESVLDIDRLRADKARLEEAASAPDLWDDQARAQQVTSQLSYVNGEITKLTDLRSRLDDTQVLLELAEAESDPGVLTEVAAEITGLAKSIDEMEVRTLLSGEYDSREALVAIRAGAGGVDAADFAEMLLRMYLRWAERHGYPTEVYETSYAEEAGLKSATFTVKVPYAYGTLSVESGTHRLVRISPFDNQGRRQTSFAGVEVLPVVEQTDHIDIPENEMRTDVYRSSGPGGQSVNTTDSAVRITHIPTGIVVTCQNEKSQLQNKASALRVLQARLLERKRQEEQAKLQGLKTDAAGSWGDQMRSYVLHPYQMVKDLRTEQETGSPSSVFDGELDAFIEAGIRWRKQQQLSGDNV.

The residue at position 251 (glutamine 251) is an N5-methylglutamine.

This sequence belongs to the prokaryotic/mitochondrial release factor family. Methylated by PrmC. Methylation increases the termination efficiency of RF2.

It is found in the cytoplasm. Peptide chain release factor 2 directs the termination of translation in response to the peptide chain termination codons UGA and UAA. The polypeptide is Peptide chain release factor 2 (Salinispora arenicola (strain CNS-205)).